We begin with the raw amino-acid sequence, 51 residues long: UPF0181 protein VVA0806 (51 aa).

It belongs to the UPF0181 family.

This chain is UPF0181 protein VVA0806, found in Vibrio vulnificus (strain YJ016).